Consider the following 423-residue polypeptide: Serine--tRNA ligase (423 aa).

Residue 231–233 (TGE) coordinates L-serine. 262 to 264 (RQE) provides a ligand contact to ATP. Position 285 (Glu285) interacts with L-serine. Residue 349–352 (EISS) participates in ATP binding. Residue Ser385 participates in L-serine binding.

It belongs to the class-II aminoacyl-tRNA synthetase family. Type-1 seryl-tRNA synthetase subfamily. Homodimer. The tRNA molecule binds across the dimer.

The protein localises to the cytoplasm. It catalyses the reaction tRNA(Ser) + L-serine + ATP = L-seryl-tRNA(Ser) + AMP + diphosphate + H(+). It carries out the reaction tRNA(Sec) + L-serine + ATP = L-seryl-tRNA(Sec) + AMP + diphosphate + H(+). The protein operates within aminoacyl-tRNA biosynthesis; selenocysteinyl-tRNA(Sec) biosynthesis; L-seryl-tRNA(Sec) from L-serine and tRNA(Sec): step 1/1. Its function is as follows. Catalyzes the attachment of serine to tRNA(Ser). Is also able to aminoacylate tRNA(Sec) with serine, to form the misacylated tRNA L-seryl-tRNA(Sec), which will be further converted into selenocysteinyl-tRNA(Sec). This Phytoplasma mali (strain AT) protein is Serine--tRNA ligase.